We begin with the raw amino-acid sequence, 350 residues long: Renin receptor (350 aa).

Residues 1–17 form the signal peptide; that stretch reads MAVLVVLLSSLVSSALA. Topologically, residues 18–302 are extracellular; that stretch reads NEFSILRSPG…YNLAYKYNLE (285 aa). Residues 303-323 form a helical membrane-spanning segment; it reads YSVVFNLVLWIMTGLALAVII. At 324-350 the chain is on the cytoplasmic side; sequence TSYNIWNMDPGYDSIIYRMTNQKIRMD. A Mediates retrograde transport to the ER motif is present at residues 346–350; sequence KIRMD.

As to quaternary structure, interacts with renin. Accessory component of the multisubunit proton-transporting vacuolar (V)-ATPase protein pump. Interacts (via N-terminus) with ATP6AP1 (via N-terminus). Interacts with ATP6V0D1; ATP6V0D1 is a V-ATPase complex subunit and the interaction promotes V-ATPase complex assembly. Interacts with TMEM9; TMEM9 is a V-ATPase assembly regulator and the interaction induces the interaction with ATP6V0D1. Interacts with VMA21 (via N-terminus); VMA21 is a V-ATPase accessory component. Post-translationally, phosphorylated. In terms of processing, proteolytically cleaved by a furin-like convertase in the trans-Golgi network to generate N- and C-terminal fragments. As to expression, expressed in the brain.

The protein localises to the endoplasmic reticulum membrane. Its subcellular location is the lysosome membrane. The protein resides in the cytoplasmic vesicle. It is found in the autophagosome membrane. It localises to the cell projection. The protein localises to the dendritic spine membrane. Its subcellular location is the axon. The protein resides in the endosome membrane. It is found in the clathrin-coated vesicle membrane. It localises to the secretory vesicle. The protein localises to the synaptic vesicle membrane. In terms of biological role, multifunctional protein which functions as a renin, prorenin cellular receptor and is involved in the assembly of the lysosomal proton-transporting V-type ATPase (V-ATPase) and the acidification of the endo-lysosomal system. May mediate renin-dependent cellular responses by activating ERK1 and ERK2. By increasing the catalytic efficiency of renin in AGT/angiotensinogen conversion to angiotensin I, may also play a role in the renin-angiotensin system (RAS). Through its function in V-type ATPase (v-ATPase) assembly and acidification of the lysosome it regulates protein degradation and may control different signaling pathways important for proper brain development, synapse morphology and synaptic transmission. This is Renin receptor (Atp6ap2) from Rattus norvegicus (Rat).